Here is a 338-residue protein sequence, read N- to C-terminus: NADH-quinone oxidoreductase subunit H (338 aa).

A run of 8 helical transmembrane segments spans residues 22-42 (VVQA…MSFI), 96-116 (VAMA…ALGV), 121-141 (IGLL…LFGG), 161-181 (ISYE…AGSF), 193-213 (VWFI…GVAV), 249-269 (YVNV…GWLA), 277-297 (FVPP…MFVL), and 315-335 (WKIC…VILM).

This sequence belongs to the complex I subunit 1 family. As to quaternary structure, NDH-1 is composed of 14 different subunits. Subunits NuoA, H, J, K, L, M, N constitute the membrane sector of the complex.

The protein resides in the cell inner membrane. It carries out the reaction a quinone + NADH + 5 H(+)(in) = a quinol + NAD(+) + 4 H(+)(out). NDH-1 shuttles electrons from NADH, via FMN and iron-sulfur (Fe-S) centers, to quinones in the respiratory chain. The immediate electron acceptor for the enzyme in this species is believed to be ubiquinone. Couples the redox reaction to proton translocation (for every two electrons transferred, four hydrogen ions are translocated across the cytoplasmic membrane), and thus conserves the redox energy in a proton gradient. This subunit may bind ubiquinone. The chain is NADH-quinone oxidoreductase subunit H from Acinetobacter baumannii (strain ATCC 17978 / DSM 105126 / CIP 53.77 / LMG 1025 / NCDC KC755 / 5377).